The chain runs to 417 residues: Gamma-glutamyl phosphate reductase (417 aa).

Belongs to the gamma-glutamyl phosphate reductase family.

The protein resides in the cytoplasm. It carries out the reaction L-glutamate 5-semialdehyde + phosphate + NADP(+) = L-glutamyl 5-phosphate + NADPH + H(+). It functions in the pathway amino-acid biosynthesis; L-proline biosynthesis; L-glutamate 5-semialdehyde from L-glutamate: step 2/2. Functionally, catalyzes the NADPH-dependent reduction of L-glutamate 5-phosphate into L-glutamate 5-semialdehyde and phosphate. The product spontaneously undergoes cyclization to form 1-pyrroline-5-carboxylate. This Shigella flexneri serotype 5b (strain 8401) protein is Gamma-glutamyl phosphate reductase.